The primary structure comprises 239 residues: UPF0641 membrane protein YHR140W (239 aa).

At methionine 1–threonine 11 the chain is on the cytoplasmic side. A helical membrane pass occupies residues leucine 12–serine 31. Over valine 32–glutamine 45 the chain is Lumenal. A helical transmembrane segment spans residues phenylalanine 46–tyrosine 66. The Cytoplasmic segment spans residues tyrosine 67 to serine 99. A helical transmembrane segment spans residues isoleucine 100–valine 120. Residues glutamate 121–lysine 125 lie on the Lumenal side of the membrane. A helical transmembrane segment spans residues threonine 126 to alanine 146. Residues aspartate 147–lysine 162 are Cytoplasmic-facing. The chain crosses the membrane as a helical span at residues histidine 163–isoleucine 183. Residues aspartate 184 to serine 204 are Lumenal-facing. The helical transmembrane segment at isoleucine 205–proline 225 threads the bilayer. Residues proline 226–asparagine 239 lie on the Cytoplasmic side of the membrane.

This sequence belongs to the UPF0641 family.

It is found in the endoplasmic reticulum membrane. The polypeptide is UPF0641 membrane protein YHR140W (Saccharomyces cerevisiae (strain ATCC 204508 / S288c) (Baker's yeast)).